The primary structure comprises 78 residues: Acyl carrier protein (78 aa).

The Carrier domain occupies 2 to 77 (SNIEDRVRKI…AAIDYVNSAS (76 aa)). Position 37 is an O-(pantetheine 4'-phosphoryl)serine (Ser37).

This sequence belongs to the acyl carrier protein (ACP) family. Post-translationally, 4'-phosphopantetheine is transferred from CoA to a specific serine of apo-ACP by AcpS. This modification is essential for activity because fatty acids are bound in thioester linkage to the sulfhydryl of the prosthetic group.

The protein localises to the cytoplasm. It functions in the pathway lipid metabolism; fatty acid biosynthesis. Carrier of the growing fatty acid chain in fatty acid biosynthesis. The chain is Acyl carrier protein from Photobacterium profundum (strain SS9).